The chain runs to 575 residues: Methionine--tRNA ligase, mitochondrial (575 aa).

The 'HIGH' region motif lies at 20 to 32; sequence PIFYPNAKPHLGH. The 'KMSKS' region signature appears at 341–345; it reads KMSKS. Lys344 contacts ATP.

This sequence belongs to the class-I aminoacyl-tRNA synthetase family.

It is found in the mitochondrion matrix. It carries out the reaction tRNA(Met) + L-methionine + ATP = L-methionyl-tRNA(Met) + AMP + diphosphate. Catalyzes the attachment of methionine to tRNA(Met) in the mitochondrion. The sequence is that of Methionine--tRNA ligase, mitochondrial (MSM1) from Saccharomyces cerevisiae (strain ATCC 204508 / S288c) (Baker's yeast).